We begin with the raw amino-acid sequence, 427 residues long: MGTPKPRILPWLVSQLDLGQLEGVAWVNKSRTRFRIPWKHGLRQDAQQEDFGIFQAWAEATGAYVPGRDKPDLPTWKRNFRSALNRKEGLRLAEDRSKDPHDPHKIYEFVNSGVGDFSQPDTSPDTNGGGSTSDTQEDILDELLGNMVLAPLPDPGPPSLAVAPEPCPQPLRSPSLDNPTPFPNLGPSENPLKRLLVPGEEWEFEVTAFYRGRQVFQQTISCPEGLRLVGSEVGDRTLPGWPVTLPDPGMSLTDRGVMSYVRHVLSCLGGGLALWRAGQWLWAQRLGHCHTYWAVSEELLPNSGHGPDGEVPKDKEGGVFDLGPFIVDLITFTEGSGRSPRYALWFCVGESWPQDQPWTKRLVMVKVVPTCLRALVEMARVGGASSLENTVDLHISNSHPLSLTSDQYKAYLQDLVEGMDFQGPGES.

A Phosphothreonine modification is found at Thr3. Positions 5 to 111 (KPRILPWLVS…DPHKIYEFVN (107 aa)) form a DNA-binding region, IRF tryptophan pentad repeat. Ser14 is modified (phosphoserine). Thr75 carries the phosphothreonine modification. Over residues 91-107 (RLAEDRSKDPHDPHKIY) the composition is skewed to basic and acidic residues. Residues 91 to 136 (RLAEDRSKDPHDPHKIYEFVNSGVGDFSQPDTSPDTNGGGSTSDTQ) form a disordered region. Ser97 and Ser123 each carry phosphoserine. The short motif at 139 to 149 (ILDELLGNMVL) is the Nuclear export signal element. A mediates interaction with ZDHHC11 region spans residues 141-427 (DELLGNMVLA…GMDFQGPGES (287 aa)). The residue at position 175 (Ser175) is a (Microbial infection) Phosphoserine. The residue at position 180 (Thr180) is a Phosphothreonine. Ser188 is subject to Phosphoserine. Lys193 participates in a covalent cross-link: Glycyl lysine isopeptide (Lys-Gly) (interchain with G-Cter in ISG15). The interval 200-360 (EEWEFEVTAF…SWPQDQPWTK (161 aa)) is interaction with HERC5. Residues Thr237, Thr244, and Thr253 each carry the phosphothreonine modification. A disulfide bridge links Cys267 with Cys289. Residues Lys360 and Lys366 each participate in a glycyl lysine isopeptide (Lys-Gly) (interchain with G-Cter in ISG15) cross-link. Lys366 bears the N6-acetyllysine mark. Ser385 is subject to Phosphoserine. Ser386 carries the post-translational modification Diphosphoserine. The residue at position 386 (Ser386) is a Phosphoserine; by TBK1. Ser396 carries the post-translational modification Phosphoserine; by IKKE and TBK1. Ser398 carries the post-translational modification Phosphoserine. Phosphothreonine is present on Thr404. Ser427 is subject to Phosphoserine.

The protein belongs to the IRF family. As to quaternary structure, monomer. Homodimer; phosphorylation-induced. Interacts (when phosphorylated) with CREBBP. Interacts with MAVS (via phosphorylated pLxIS motif). Interacts with TICAM1 (via phosphorylated pLxIS motif). Interacts with STING1 (via phosphorylated pLxIS motif). Interacts with IKBKE and TBK1. Interacts with TICAM2. Interacts with RBCK1. Interacts with HERC5. Interacts with DDX3X (phosphorylated at 'Ser-102'); the interaction allows the phosphorylation and activation of IRF3 by IKBKE. Interacts with TRIM21 and ULK1, in the presence of TRIM21; this interaction leads to IRF3 degradation by autophagy. Interacts with RIOK3; RIOK3 probably mediates the interaction of TBK1 with IRF3. Interacts with ILRUN; the interaction inhibits IRF3 binding to its DNA consensus sequence. Interacts with LYAR; this interaction impairs IRF3 DNA-binding activity. Interacts with TRAF3. Interacts with ZDHHC11; ZDHHC11 recruits IRF3 to STING1 upon DNA virus infection and thereby promotes IRF3 activation. Interacts with HSP90AA1; the interaction mediates IRF3 association with TOMM70. Interacts with BCL2; the interaction decreases upon Sendai virus infection. Interacts with BAX; the interaction is direct, increases upon Sendai virus infection and mediates the formation of the apoptosis complex TOMM70:HSP90AA1:IRF3:BAX. Interacts with DDX56. Interacts with NBR1. In terms of assembly, (Microbial infection) Interacts with rotavirus A NSP1 (via pLxIS motif); this interaction leads to the proteasome-dependent degradation of IRF3. (Microbial infection) Interacts with herpes virus 8/HHV-8 protein VIRF1. As to quaternary structure, (Microbial infection) Interacts with Seneca Valley virus protease 3C; this interaction is involved in the suppression of IRF3 expression and phosphorylation by the virus. In terms of assembly, (Microbial infection) Interacts with herpes virus 2/HHV-2 protein ICP27; this interaction inhibits IRF3 phosphorylation and nuclear translocation. (Microbial infection) Interacts with human cytomegalovirus protein UL44; this interaction prevents IRF3 binding to its promoters. As to quaternary structure, (Microbial infection) Interacts with the two fragments of MERS-COV protein N produced by CASP6 through proteolytic cleavage; both interactions inhibit IRF3 nuclear translocation after activation and IFN signaling. Constitutively phosphorylated on many Ser/Thr residues. Activated following phosphorylation by TBK1 and IKBKE. Innate adapter proteins, such as MAVS, STING1 or TICAM1, are first activated by viral RNA, cytosolic DNA, and bacterial lipopolysaccharide (LPS), respectively, leading to activation of the kinases TBK1 and IKBKE. These kinases then phosphorylate the adapter proteins on the pLxIS motif, leading to recruitment of IRF3, thereby licensing IRF3 for phosphorylation by TBK1. Phosphorylation at Ser-386 is followed by pyrophosphorylation at the same residue, promoting phosphorylation at Ser-396. Phosphorylated IRF3 dissociates from the adapter proteins, dimerizes, and then enters the nucleus to induce IFNs. In terms of processing, pyrophosphorylated by UAP1 following phosphorylation at Ser-386 by TBK1. Pyrophosphorylation promotes subsequent phosphorylation at Ser-396, leading to homodimerization of IRF3. Post-translationally, acetylation at Lys-366 by KAT8 inhibits recruimtent to promoters and transcription factor activity. Acetylation by KAT8 is promoted by phosphorylation at Ser-396. Ubiquitinated; ubiquitination involves RBCK1 leading to proteasomal degradation. Polyubiquitinated; ubiquitination involves TRIM21 leading to proteasomal degradation. Ubiquitinated by UBE3C, leading to its degradation. Deubiquitinated by USP5 on both 'Lys-48'-linked unanchored and 'Lys-63'-linked anchored polyubiquitin, leading to inhibition of anti-RNA viral innate immunity. In terms of processing, ISGylated by HERC5 resulting in sustained IRF3 activation and in the inhibition of IRF3 ubiquitination by disrupting PIN1 binding. The phosphorylation state of IRF3 does not alter ISGylation. Post-translationally, proteolytically cleaved by apoptotic caspases during apoptosis, leading to its inactivation. Cleavage by CASP3 during virus-induced apoptosis inactivates it, preventing cytokine overproduction. (Microbial infection) ISGylated. ISGylation is cleaved and removed by SARS-COV-2 nsp3 which attenuates type I interferon responses. In terms of processing, (Microbial infection) Phosphorylation and subsequent activation of IRF3 is inhibited by vaccinia virus protein E3. Post-translationally, (Microbial infection) Phosphorylated by herpes simplex virus 1/HHV-1 US3 at Ser-175 to prevent IRF3 activation. Expressed constitutively in a variety of tissues.

Its subcellular location is the cytoplasm. The protein localises to the nucleus. It is found in the mitochondrion. Its activity is regulated as follows. In the absence of viral infection, maintained as a monomer in an autoinhibited state. Phosphorylation by TBK1 and IKBKE disrupts this autoinhibition leading to the liberation of the DNA-binding and dimerization activities and its nuclear localization where it can activate type I IFN and ISG genes. Phosphorylation and activation follow the following steps: innate adapter proteins, such as MAVS, STING1 or TICAM1, are first activated by viral RNA, cytosolic DNA and bacterial lipopolysaccharide (LPS), respectively, leading to activation of the kinases TBK1 and IKBKE. These kinases then phosphorylate the adapter proteins on their pLxIS motif, leading to recruitment of IRF3, thereby licensing IRF3 for phosphorylation by TBK1. Phosphorylated IRF3 dissociates from the adapter proteins, dimerizes, and then enters the nucleus to induce IFNs. (Microbial infection) Activated upon coronavirus SARS-CoV-2 infection. Its function is as follows. Key transcriptional regulator of type I interferon (IFN)-dependent immune responses which plays a critical role in the innate immune response against DNA and RNA viruses. Regulates the transcription of type I IFN genes (IFN-alpha and IFN-beta) and IFN-stimulated genes (ISG) by binding to an interferon-stimulated response element (ISRE) in their promoters. Acts as a more potent activator of the IFN-beta (IFNB) gene than the IFN-alpha (IFNA) gene and plays a critical role in both the early and late phases of the IFNA/B gene induction. Found in an inactive form in the cytoplasm of uninfected cells and following viral infection, double-stranded RNA (dsRNA), or toll-like receptor (TLR) signaling, is phosphorylated by IKBKE and TBK1 kinases. This induces a conformational change, leading to its dimerization and nuclear localization and association with CREB binding protein (CREBBP) to form dsRNA-activated factor 1 (DRAF1), a complex which activates the transcription of the type I IFN and ISG genes. Can activate distinct gene expression programs in macrophages and can induce significant apoptosis in primary macrophages. In response to Sendai virus infection, is recruited by TOMM70:HSP90AA1 to mitochondrion and forms an apoptosis complex TOMM70:HSP90AA1:IRF3:BAX inducing apoptosis. Key transcription factor regulating the IFN response during SARS-CoV-2 infection. The sequence is that of Interferon regulatory factor 3 from Homo sapiens (Human).